Consider the following 263-residue polypeptide: Trans-aconitate 2-methyltransferase (263 aa).

This sequence belongs to the methyltransferase superfamily. Tam family.

It localises to the cytoplasm. It carries out the reaction trans-aconitate + S-adenosyl-L-methionine = (E)-3-(methoxycarbonyl)pent-2-enedioate + S-adenosyl-L-homocysteine. Functionally, catalyzes the S-adenosylmethionine monomethyl esterification of trans-aconitate. The polypeptide is Trans-aconitate 2-methyltransferase (Mycobacterium ulcerans (strain Agy99)).